A 131-amino-acid chain; its full sequence is Histone H2B.2 (131 aa).

Residues 1-19 (MSAKAEKKPASKAPAEKKP) are compositionally biased toward basic and acidic residues. The disordered stretch occupies residues 1 to 38 (MSAKAEKKPASKAPAEKKPAAKKTAPSSDGKKRTKARK). N6-acetyllysine; alternate occurs at positions 7 and 8. Glycyl lysine isopeptide (Lys-Gly) (interchain with G-Cter in SUMO); alternate cross-links involve residues lysine 7 and lysine 8. Phosphoserine is present on serine 11. Lysine 12 bears the N6-acetyllysine mark. Lysine 17 is modified (N6-acetyllysine; alternate). Lysine 17 participates in a covalent cross-link: Glycyl lysine isopeptide (Lys-Gly) (interchain with G-Cter in SUMO); alternate. Lysine 18 is covalently cross-linked (Glycyl lysine isopeptide (Lys-Gly) (interchain with G-Cter in SUMO)). Residue lysine 124 forms a Glycyl lysine isopeptide (Lys-Gly) (interchain with G-Cter in ubiquitin) linkage.

Belongs to the histone H2B family. In terms of assembly, the nucleosome is a histone octamer containing two molecules each of H2A, H2B, H3 and H4 assembled in one H3-H4 heterotetramer and two H2A-H2B heterodimers. The octamer wraps approximately 147 bp of DNA. In terms of processing, monoubiquitinated by the UBC2-BRE1 complex to form H2BK123ub1. H2BK123ub1 gives a specific tag for epigenetic transcriptional activation and is also prerequisite for H3K4me and H3K79me formation. H2BK123ub1 also modulates the formation of double-strand breaks during meiosis and is a prerequisite for DNA-damage checkpoint activation. Post-translationally, phosphorylated by STE20 to form H2BS10ph during progression through meiotic prophase. May be correlated with chromosome condensation. Acetylated by GCN5 to form H2BK11ac and H2BK16ac. H2BK16ac can also be formed by ESA1. Acetylation of N-terminal lysines and particularly formation of H2BK11acK16ac has a positive effect on transcription. In terms of processing, sumoylation to form H2BK6su or H2BK7su, and probably also H2BK16su or H2BK17su, occurs preferentially near the telomeres and represses gene transcription.

The protein localises to the nucleus. It localises to the chromosome. Core component of nucleosome. Nucleosomes wrap and compact DNA into chromatin, limiting DNA accessibility to the cellular machineries which require DNA as a template. Histones thereby play a central role in transcription regulation, DNA repair, DNA replication and chromosomal stability. DNA accessibility is regulated via a complex set of post-translational modifications of histones, also called histone code, and nucleosome remodeling. In Candida glabrata (strain ATCC 2001 / BCRC 20586 / JCM 3761 / NBRC 0622 / NRRL Y-65 / CBS 138) (Yeast), this protein is Histone H2B.2 (HTB2).